A 545-amino-acid chain; its full sequence is Chaperonin GroEL (545 aa).

ATP-binding positions include 30-33, K51, 87-91, G415, 479-481, and D495; these read TLGP, DGTTT, and NAA.

Belongs to the chaperonin (HSP60) family. In terms of assembly, forms a cylinder of 14 subunits composed of two heptameric rings stacked back-to-back. Interacts with the co-chaperonin GroES.

It localises to the cytoplasm. It carries out the reaction ATP + H2O + a folded polypeptide = ADP + phosphate + an unfolded polypeptide.. Its function is as follows. Together with its co-chaperonin GroES, plays an essential role in assisting protein folding. The GroEL-GroES system forms a nano-cage that allows encapsulation of the non-native substrate proteins and provides a physical environment optimized to promote and accelerate protein folding. In Salmonella agona (strain SL483), this protein is Chaperonin GroEL.